The following is a 141-amino-acid chain: Hemoglobin subunit alpha (141 aa).

The 141-residue stretch at 1-141 (VLSAADKTAI…VATALGSHYR (141 aa)) folds into the Globin domain. His-59 provides a ligand contact to O2. A heme b-binding site is contributed by His-88.

The protein belongs to the globin family. Heterotetramer of two alpha chains and two beta chains. As to expression, red blood cells.

Involved in oxygen transport from the lung to the various peripheral tissues. The sequence is that of Hemoglobin subunit alpha (HBA) from Squalus acanthias (Spiny dogfish).